The chain runs to 286 residues: tRNA uridine(34) hydroxylase (286 aa).

Positions 130–225 (RGDDVVFFDG…YGETFGDRGL (96 aa)) constitute a Rhodanese domain. The Cysteine persulfide intermediate role is filled by C185.

This sequence belongs to the TrhO family.

The enzyme catalyses uridine(34) in tRNA + AH2 + O2 = 5-hydroxyuridine(34) in tRNA + A + H2O. Its function is as follows. Catalyzes oxygen-dependent 5-hydroxyuridine (ho5U) modification at position 34 in tRNAs. The protein is tRNA uridine(34) hydroxylase of Rhodococcus erythropolis (strain PR4 / NBRC 100887).